Consider the following 206-residue polypeptide: Uridine kinase (206 aa).

11-18 contributes to the ATP binding site; the sequence is GGSASGKT.

The protein belongs to the uridine kinase family.

Its subcellular location is the cytoplasm. The catalysed reaction is uridine + ATP = UMP + ADP + H(+). It catalyses the reaction cytidine + ATP = CMP + ADP + H(+). The protein operates within pyrimidine metabolism; CTP biosynthesis via salvage pathway; CTP from cytidine: step 1/3. It participates in pyrimidine metabolism; UMP biosynthesis via salvage pathway; UMP from uridine: step 1/1. The polypeptide is Uridine kinase (Lactococcus lactis subsp. cremoris (strain MG1363)).